Reading from the N-terminus, the 532-residue chain is Putative F-box/LRR-repeat protein At3g42770 (532 aa).

In terms of domain architecture, F-box spans 1–46 (MNCLPDELLVQILSFLPTKEATSTSLLSKRWRTLFTLSPNLDFDNS). LRR repeat units follow at residues 113-135 (VSELHLRIDYTKRCHLPSEIFTS), 279-305 (IRNVKTLHLTSSTVKVILLCCKGEIPM), and 398-420 (MNDLKKMQLTEDLLKLPKASPKL).

This is Putative F-box/LRR-repeat protein At3g42770 from Arabidopsis thaliana (Mouse-ear cress).